A 416-amino-acid chain; its full sequence is UDP-N-acetylmuramoylalanine--D-glutamate ligase (416 aa).

Residue Gly-108–Thr-114 participates in ATP binding.

Belongs to the MurCDEF family.

Its subcellular location is the cytoplasm. The enzyme catalyses UDP-N-acetyl-alpha-D-muramoyl-L-alanine + D-glutamate + ATP = UDP-N-acetyl-alpha-D-muramoyl-L-alanyl-D-glutamate + ADP + phosphate + H(+). The protein operates within cell wall biogenesis; peptidoglycan biosynthesis. In terms of biological role, cell wall formation. Catalyzes the addition of glutamate to the nucleotide precursor UDP-N-acetylmuramoyl-L-alanine (UMA). In Chlamydia trachomatis serovar L2b (strain UCH-1/proctitis), this protein is UDP-N-acetylmuramoylalanine--D-glutamate ligase.